An 835-amino-acid chain; its full sequence is Probable alpha-glucuronidase A (835 aa).

A signal peptide spans 1–18 (MRWSFLTVLLWLVSLTGA). 12 N-linked (GlcNAc...) asparagine glycosylation sites follow: N49, N101, N148, N221, N278, N309, N342, N460, N522, N571, N677, and N727.

It belongs to the glycosyl hydrolase 67 family.

Its subcellular location is the secreted. It catalyses the reaction an alpha-D-glucuronoside + H2O = D-glucuronate + an alcohol. In terms of biological role, alpha-glucuronidase involved in the hydrolysis of xylan, a major structural heterogeneous polysaccharide found in plant biomass representing the second most abundant polysaccharide in the biosphere, after cellulose. Releases 4-O-methylglucuronic acid from xylan. In Aspergillus oryzae (strain ATCC 42149 / RIB 40) (Yellow koji mold), this protein is Probable alpha-glucuronidase A (aguA).